Consider the following 558-residue polypeptide: Podocalyxin (558 aa).

The first 22 residues, 1–22 (MRCALALSALLLLLSTPPLLPS), serve as a signal peptide directing secretion. Pro residues predominate over residues 20–29 (LPSSPSPSPS). 3 disordered regions span residues 20–50 (LPSS…PTPA), 83–210 (LGVS…DHLM), and 270–338 (SVIS…VAHE). The Extracellular portion of the chain corresponds to 23-461 (SPSPSPSPSQ…EEAEDRFSMP (439 aa)). 2 stretches are compositionally biased toward polar residues: residues 32–50 (QNAT…PTPA) and 83–107 (LGVS…NTTV). Asn-33, Asn-43, and Asn-104 each carry an N-linked (GlcNAc...) asparagine glycan. The segment covering 125 to 142 (STKSADTTTVATSTATAK) has biased composition (low complexity). 3 stretches are compositionally biased toward polar residues: residues 143 to 173 (PNTT…LTST), 190 to 204 (RQPT…PTSS), and 270 to 302 (SVIS…TSPA). N-linked (GlcNAc...) asparagine glycosylation is present at Asn-144. A compositionally biased stretch (low complexity) spans 313–324 (TMSSSPTAASTT). N-linked (GlcNAc...) asparagine glycosylation is present at Asn-360. The chain crosses the membrane as a helical span at residues 462-482 (LIITIVCMASFLLLVAALYGC). Topologically, residues 483-558 (CHQRLSQRKD…DLDEEEDTHL (76 aa)) are cytoplasmic. The residue at position 518 (Thr-518) is a Phosphothreonine. Residues Ser-529 and Ser-537 each carry the phosphoserine modification. Position 556 is a phosphothreonine (Thr-556).

It belongs to the podocalyxin family. As to quaternary structure, monomer; when associated with the membrane raft. Oligomer; when integrated in the apical membrane. Interacts (via the C-terminal PDZ-binding motif DTHL) with NHERF1 (via the PDZ domains); the interaction is not detected in glomerular epithelium cells, take place early in the secretory pathway and is necessary for its apical membrane sorting. Found in a complex with EZR, PODXL and NHERF2. Associates with the actin cytoskeleton through complex formation with EZR and NHERF2. Interacts (via the C-terminal PDZ-binding motif DTHL) with NHERF2 (via the PDZ 1 domain); interaction is detected in glomerular epithelium cells. Interacts with EZR. In terms of processing, N- and O-linked glycosylated. Sialoglycoprotein. As to expression, glomerular epithelium cell (podocyte).

The protein resides in the apical cell membrane. The protein localises to the cell projection. It localises to the lamellipodium. Its subcellular location is the filopodium. It is found in the ruffle. The protein resides in the microvillus. The protein localises to the membrane raft. It localises to the membrane. In terms of biological role, involved in the regulation of both adhesion and cell morphology and cancer progression. Functions as an anti-adhesive molecule that maintains an open filtration pathway between neighboring foot processes in the podocyte by charge repulsion. Acts as a pro-adhesive molecule, enhancing the adherence of cells to immobilized ligands, increasing the rate of migration and cell-cell contacts in an integrin-dependent manner. Induces the formation of apical actin-dependent microvilli. Involved in the formation of a preapical plasma membrane subdomain to set up initial epithelial polarization and the apical lumen formation during renal tubulogenesis. Plays a role in cancer development and aggressiveness by inducing cell migration and invasion through its interaction with the actin-binding protein EZR. Affects EZR-dependent signaling events, leading to increased activities of the MAPK and PI3K pathways in cancer cells. This Homo sapiens (Human) protein is Podocalyxin (PODXL).